Here is a 283-residue protein sequence, read N- to C-terminus: MRESQLSPIGVFDSGVGGLTVLRELYRQLPQESILYFADTARLPYGTRSKGEIIEFVLEILTWMSERRVKMVIMACNTSSALALEEVQAEFKDLPILGVILPGAKTAVQKGKRIGVISTPATAKSNAYKQAIQEIDPTAQVWQIPCPEFVPLIEANRIFDPYTTQVAREYLQPLLAENIDTLVYGCTHYRHLSPVLRRLLPSSVRLVDPAASVVRAAEKELELLGLKNPETPLPTNFAVSGDPDTFARLSRQWLGFSPRVEKVYLQCRVKTLGFTDGMKQRPV.

Substrate is bound by residues 13–14 (DS) and 45–46 (YG). The Proton donor/acceptor role is filled by Cys-76. 77–78 (NT) is a substrate binding site. Cys-186 acts as the Proton donor/acceptor in catalysis. 187–188 (TH) contacts substrate.

Belongs to the aspartate/glutamate racemases family.

The catalysed reaction is L-glutamate = D-glutamate. It participates in cell wall biogenesis; peptidoglycan biosynthesis. Functionally, provides the (R)-glutamate required for cell wall biosynthesis. This Microcystis aeruginosa (strain NIES-843 / IAM M-2473) protein is Glutamate racemase.